A 144-amino-acid polypeptide reads, in one-letter code: MRLNTLSPAVGAKSAPKRVGRGIGSGLGKTAGRGHKGQKSRSGGGVRPGFEGGQMPLKIRLPKFGFTSRVSMVTAEVRLGELAKVNGDVIDLNALKDANVVTRNIQFAKVVLSGTIERPVTVKGLKVTKGARAAIEAAGGKIEE.

The tract at residues 1–53 is disordered; that stretch reads MRLNTLSPAVGAKSAPKRVGRGIGSGLGKTAGRGHKGQKSRSGGGVRPGFEGG. 2 stretches are compositionally biased toward gly residues: residues 21 to 31 and 42 to 52; these read RGIGSGLGKTA and SGGGVRPGFEG.

The protein belongs to the universal ribosomal protein uL15 family. Part of the 50S ribosomal subunit.

Its function is as follows. Binds to the 23S rRNA. The chain is Large ribosomal subunit protein uL15 from Shewanella amazonensis (strain ATCC BAA-1098 / SB2B).